The primary structure comprises 486 residues: Vanillin dehydrogenase (486 aa).

NAD(+) contacts are provided by residues 210–211, 230–231, and 252–254; these read GP, GS, and ELG. Catalysis depends on Glu-252, which acts as the Proton acceptor. Cys-286 serves as the catalytic Nucleophile. Position 380 to 382 (380 to 382) interacts with NAD(+); that stretch reads EVF.

This sequence belongs to the aldehyde dehydrogenase family.

The catalysed reaction is vanillin + NAD(+) + H2O = vanillate + NADH + 2 H(+). Catalyzes NAD(+)-dependent oxidation of vanillin to vanillate. Also oxidizes other aromatic aldehydes including benzaldehyde, coniferyl aldehyde and cinnamaldehyde, but has a preference for vanillin. Not active with NADP(+). Involved in the degradation pathway of lignin-derived aromatic compounds of plant cell walls. Catalyzes the conversion of vanillin to vanillate due to toxicity of vanillin to the cells. The protein is Vanillin dehydrogenase of Amycolatopsis sp. (strain ATCC 39116 / 75iv2).